The chain runs to 423 residues: MALPARSDSGCAVPVEFTSAEQAAAHIGANSLQDGPIGRVGLEIEAHCFDLSNPTRRPSWDELSAVIADVPPLPGGSRITVEPGGAVELSGPPYDGPLAAVAALQADRAVLRAEFARRNLGLVLLGTDPLRPTRRVNPGARYSAMEQFFTASGTAEAGAAMMTATASVQVNLDAGPRDGWAERVRLAHALGPTMIAITANSPMLGGQFTGWCSTRQRVWGQLDSARCGPVLGVDGDDPASEWARYALRAPVMLVNSPDAVPVTNWVPFADWADGRAVLGGRRPTEADLDYHLTTLFPPVRPRRWLEIRYLDSVPDALWPAAVFTLTTLLDDPVAAESAAEATRPVATAWDRAARMGLTDRHLHTAALTCVRLAAERAPAELEESMTLLMRSVQQRRSPADDFSDRVVARGIAAAVRELAKGEL.

Belongs to the glutamate--cysteine ligase type 2 family. EgtA subfamily.

The catalysed reaction is L-cysteine + L-glutamate + ATP = gamma-L-glutamyl-L-cysteine + ADP + phosphate + H(+). The protein operates within amino-acid biosynthesis; ergothioneine biosynthesis. Functionally, catalyzes the synthesis of gamma-glutamylcysteine (gamma-GC). This compound is used as substrate for the biosynthesis of the low-molecular thiol compound ergothioneine. This chain is Glutamate--cysteine ligase EgtA, found in Mycolicibacterium smegmatis (strain ATCC 700084 / mc(2)155) (Mycobacterium smegmatis).